A 428-amino-acid polypeptide reads, in one-letter code: 5'-deoxyadenosine deaminase (428 aa).

Zn(2+) is bound by residues histidine 59 and histidine 61. 2 residues coordinate substrate: glutamate 88 and histidine 180. Zn(2+) is bound at residue histidine 207. The substrate site is built by glutamate 210 and aspartate 296. Position 296 (aspartate 296) interacts with Zn(2+).

Belongs to the metallo-dependent hydrolases superfamily. MTA/SAH deaminase family. In terms of assembly, homotetramer. Zn(2+) serves as cofactor.

The enzyme catalyses 5'-deoxyadenosine + H2O + H(+) = 5'-deoxyinosine + NH4(+). The catalysed reaction is S-adenosyl-L-homocysteine + H2O + H(+) = S-inosyl-L-homocysteine + NH4(+). It carries out the reaction S-methyl-5'-thioadenosine + H2O + H(+) = S-methyl-5'-thioinosine + NH4(+). It catalyses the reaction adenosine + H2O + H(+) = inosine + NH4(+). It participates in amino-acid biosynthesis; S-adenosyl-L-methionine biosynthesis. Its function is as follows. Catalyzes the deamination of three SAM-derived enzymatic products, namely 5'-deoxyadenosine, S-adenosyl-L-homocysteine, and 5'-methylthioadenosine, to produce the inosine analogs. Can also deaminate adenosine. The preferred substrate for this enzyme is 5'-deoxyadenosine, but all these substrates are efficiently deaminated. Likely functions in a S-adenosyl-L-methionine (SAM) recycling pathway from S-adenosyl-L-homocysteine (SAH) produced from SAM-dependent methylation reactions. May also be involved in the recycling of 5'-deoxyadenosine, whereupon the 5'-deoxyribose moiety of 5'-deoxyinosine is further metabolized to deoxyhexoses used for the biosynthesis of aromatic amino acids in methanogens. This chain is 5'-deoxyadenosine deaminase, found in Methanococcus aeolicus (strain ATCC BAA-1280 / DSM 17508 / OCM 812 / Nankai-3).